Here is a 256-residue protein sequence, read N- to C-terminus: Stanniocalcin (256 aa).

The signal sequence occupies residues 1-18; it reads MLAKFGLCAVFLVLGTAA. The propeptide occupies 19 to 33; it reads TFDTDPEEASPRRAR. N-linked (GlcNAc...) asparagine glycosylation occurs at N62.

Belongs to the stanniocalcin family. Homodimer; disulfide-linked. In terms of tissue distribution, produced and secreted by the corpuscles of Stannius.

The protein resides in the secreted. Functionally, its primary function is the prevention of hypercalcemia. Upon release into the circulation, it lowers calcium transport by the gills, thereby reducing its rate of influx from the environment into the extracellular compartment. STC also stimulates phosphate reabsorption by renal proximal tubules. The consequence of this action is increased levels of plasma phosphate, which combines with excess calcium and promotes its disposal into bone and scales. This chain is Stanniocalcin (stc), found in Oncorhynchus kisutch (Coho salmon).